A 75-amino-acid chain; its full sequence is Small ribosomal subunit protein bS18c (75 aa).

It belongs to the bacterial ribosomal protein bS18 family. Part of the 30S ribosomal subunit.

It localises to the plastid. The chain is Small ribosomal subunit protein bS18c from Aneura mirabilis (Parasitic liverwort).